We begin with the raw amino-acid sequence, 362 residues long: GDSL esterase/lipase At5g45670 (362 aa).

The N-terminal stretch at 1–23 is a signal peptide; the sequence is MARMSLMIMMIMVAVTMINIAKS. The active-site Nucleophile is the serine 36. Residues aspartate 326 and histidine 329 contribute to the active site.

The protein belongs to the 'GDSL' lipolytic enzyme family.

Its subcellular location is the secreted. The chain is GDSL esterase/lipase At5g45670 from Arabidopsis thaliana (Mouse-ear cress).